A 336-amino-acid polypeptide reads, in one-letter code: Retinol dehydrogenase 10-B (336 aa).

A helical; Signal-anchor transmembrane segment spans residues 7–27 (LFVVTFKIIWSFVLAGAKWFI). 40-64 (VITGAGSGLGRLFALEFARRRATLV) provides a ligand contact to NADP(+). Ser-192 lines the substrate pocket. The active-site Proton acceptor is the Tyr-205.

Belongs to the short-chain dehydrogenases/reductases (SDR) family.

Its subcellular location is the microsome membrane. It is found in the endoplasmic reticulum membrane. The catalysed reaction is all-trans-retinol + NADP(+) = all-trans-retinal + NADPH + H(+). It participates in cofactor metabolism; retinol metabolism. Its function is as follows. Retinol dehydrogenase with a clear preference for NADP. Converts all-trans-retinol to all-trans-retinal. Has no detectable activity towards 11-cis-retinol, 9-cis-retinol and 13-cis-retinol. This chain is Retinol dehydrogenase 10-B (rdh10b), found in Danio rerio (Zebrafish).